We begin with the raw amino-acid sequence, 508 residues long: Photosystem II CP47 reaction center protein (508 aa).

Transmembrane regions (helical) follow at residues 21–36 (AVHI…WAGS), 101–115 (IVFS…IWHW), 140–156 (GIHL…FGAF), 203–218 (IAAG…FHLS), 237–252 (VLSS…AFVV), and 457–472 (SFAL…HGAR).

The protein belongs to the PsbB/PsbC family. PsbB subfamily. PSII is composed of 1 copy each of membrane proteins PsbA, PsbB, PsbC, PsbD, PsbE, PsbF, PsbH, PsbI, PsbJ, PsbK, PsbL, PsbM, PsbT, PsbX, PsbY, PsbZ, Psb30/Ycf12, at least 3 peripheral proteins of the oxygen-evolving complex and a large number of cofactors. It forms dimeric complexes. It depends on Binds multiple chlorophylls. PSII binds additional chlorophylls, carotenoids and specific lipids. as a cofactor.

It localises to the plastid. It is found in the chloroplast thylakoid membrane. Its function is as follows. One of the components of the core complex of photosystem II (PSII). It binds chlorophyll and helps catalyze the primary light-induced photochemical processes of PSII. PSII is a light-driven water:plastoquinone oxidoreductase, using light energy to abstract electrons from H(2)O, generating O(2) and a proton gradient subsequently used for ATP formation. The polypeptide is Photosystem II CP47 reaction center protein (Trachelium caeruleum (Blue throatwort)).